Reading from the N-terminus, the 586-residue chain is Adenine deaminase (586 aa).

This sequence belongs to the metallo-dependent hydrolases superfamily. Adenine deaminase family. It depends on Mn(2+) as a cofactor.

The enzyme catalyses adenine + H2O + H(+) = hypoxanthine + NH4(+). The sequence is that of Adenine deaminase from Bdellovibrio bacteriovorus (strain ATCC 15356 / DSM 50701 / NCIMB 9529 / HD100).